Reading from the N-terminus, the 1436-residue chain is MENILDPSVVNSHILENGSRRSSINPILDSELRDKTFEKAHRRSLTLLSSFTSSMLELPNNGKEENHRRPSVARSSSDRSKASAKEDLFSEAFRMAEQPPAEALTISTPVDPINIDELDRAYAVSPSDTSNLLHPPTSSSSIPIPIKNAGHSNLDHPIRPSLQSSISSNRIIKSPGIKEDDYMHRGRSISSPMIDVEHINSTAVPSKTKNLPEKPKRSHKLRNSITFAKIEDHPERKSQLRRLSSSLKCFDPEYDYNDPSLSIRRDSSTYYFSNVNETYDEEDSDLDSETSTVNWVQSVLNLPSLLSDDLMANPKNKERFEWQYMLTSVLTGDIVRSEKLRLRKIASSREGRNSDYSDNLWMEIWCWLTHRSVDSYRENLKHLRTGMVDVLLAIMNFHWDESNELTPIVAVDNMLQKLDKYERLYPSRRSILQEHSLYASESFQHKLDVLTAYSNVTHALEIQVNIIRSWVGNEEMDITKNTTNSINNVSQISNGPFVERFYRETGLIRAFEQRIMTNMNSVLSKVCNTIVTYADDLKSYGLPLIADDYMRLLSFPFRLIKEFLNLRLSCAENITSISLFTIDSLLDDLRNTMKVAVHIIQQHTVLIKPFRDDSKFVDENQSLNNILVASLKFYFNLLHRKVRNGCALLHFKETEILEGEWDFLLAVCPHIEHGFQIMSKSLSSLVGEILTNINRYLKDQLQGPDTDDSALITSFYIKVLDCVRIRFRKLMSFTRILKAHLENSCEYVIKENSLSLLIQRLEESNHVLTYTASIEHEGAYVIVPGHLVDSPNILREVLSMTFNKGDNNFESVPPYAVVLAPDSSICWNGHVTDLDIPEVSISIAPNCVRLVTLATANQLSVIEDYFISIVGDTVSLVDSAKANSSKINKQMTKIKRNSLKLALSLLDVIQTIRTRYHGMNCQNLIHYSFSYAIEFAQRLMRLSILDASSIGLIRRKMIQLAISWVGFIYEDCSPTDRNTFRWTVTALEFAMIMTYGSNILMIDKKSFEELKEKVGKCVALLLLHFDVMGTKHAGRSMDQQAGDIPARLVRNNSDRSRLSDNELASFVKEEVMHRIIELESNRRDRLYKSQLIGRVLDDTTKENRLLKELASSKSNITIRWQQGGLIGSGSFGTVYRAVNLDTGDLMAVKEVALHKPRISRPMIKRIKGEMLVLELFDHPNVVSYYGIEVHREKVNIFMELCQGSSLFEFLRYGRIEDELVIQVYVLQLLEGLAYIHSCGVSHQDVKPENILFDHNGIMKFTDFGSAKMSGSASTKIFEQLTQQEEEEFEKDSEFLQHLDQNRGYSLTGTPTYMAPELILGNPSERVGAMDIWSLGCVIVEMATGSPPWPRLDNHFSLMYHIAAHNPPIIPADDQLSPLGQNFLKRCFVSDPNQRATAAELLMDPWVYPLRAGTEFDLMNSSVVESAPSTNGAPLEL.

A disordered region spans residues 56–85; it reads LELPNNGKEENHRRPSVARSSSDRSKASAK. Residues 76–85 are compositionally biased toward basic and acidic residues; it reads SSDRSKASAK. Serine 224 carries the phosphoserine modification. A Phosphothreonine modification is found at threonine 226. The tract at residues 282–1123 is interaction with tea4; the sequence is EDSDLDSETS…SNITIRWQQG (842 aa). The Protein kinase domain maps to 1120–1406; the sequence is WQQGGLIGSG…AAELLMDPWV (287 aa). Residues 1126–1134 and lysine 1149 each bind ATP; that span reads IGSGSFGTV. Aspartate 1244 functions as the Proton acceptor in the catalytic mechanism.

Belongs to the protein kinase superfamily. STE Ser/Thr protein kinase family. MAP kinase kinase kinase subfamily. As to quaternary structure, interacts with tea4.

It catalyses the reaction L-seryl-[protein] + ATP = O-phospho-L-seryl-[protein] + ADP + H(+). The catalysed reaction is L-threonyl-[protein] + ATP = O-phospho-L-threonyl-[protein] + ADP + H(+). Its function is as follows. Involved in a signal transduction pathway that is activated by changes in the osmolarity of the extracellular environment. Activates the wis1 MAP kinase kinase by phosphorylation. This is MAP kinase kinase kinase win1 (win1) from Schizosaccharomyces pombe (strain 972 / ATCC 24843) (Fission yeast).